The primary structure comprises 162 residues: NADH-quinone oxidoreductase subunit I 2 (162 aa).

2 4Fe-4S ferredoxin-type domains span residues 52 to 82 (LRRY…IEAG) and 93 to 122 (VRYD…EGPN). Cys62, Cys65, Cys68, Cys72, Cys102, Cys105, Cys108, and Cys112 together coordinate [4Fe-4S] cluster.

Belongs to the complex I 23 kDa subunit family. NDH-1 is composed of 14 different subunits. Subunits NuoA, H, J, K, L, M, N constitute the membrane sector of the complex. [4Fe-4S] cluster serves as cofactor.

Its subcellular location is the cell inner membrane. The catalysed reaction is a quinone + NADH + 5 H(+)(in) = a quinol + NAD(+) + 4 H(+)(out). In terms of biological role, NDH-1 shuttles electrons from NADH, via FMN and iron-sulfur (Fe-S) centers, to quinones in the respiratory chain. The immediate electron acceptor for the enzyme in this species is believed to be ubiquinone. Couples the redox reaction to proton translocation (for every two electrons transferred, four hydrogen ions are translocated across the cytoplasmic membrane), and thus conserves the redox energy in a proton gradient. The chain is NADH-quinone oxidoreductase subunit I 2 from Rhodopseudomonas palustris (strain BisB5).